A 56-amino-acid chain; its full sequence is uncharacterized protein (56 aa).

This is an uncharacterized protein from Thermoproteus tenax virus 1 (strain KRA1) (TTV1).